Reading from the N-terminus, the 1293-residue chain is Phosphoribosylformylglycinamidine synthase (1293 aa).

Residues 305-316 (GAATGSGGEIRD) and Ala-676 each bind ATP. Mg(2+)-binding residues include Asp-677, Glu-716, Asn-720, and Asp-884. Position 886 (Ser-886) interacts with ATP. The Glutamine amidotransferase type-1 domain maps to 1040 to 1293 (MAILREQGVN…MFRNARVKLG (254 aa)). Residue Cys-1133 is the Nucleophile of the active site. Residues His-1258 and Glu-1260 contribute to the active site.

This sequence in the N-terminal section; belongs to the FGAMS family. In terms of assembly, monomer.

It localises to the cytoplasm. It catalyses the reaction N(2)-formyl-N(1)-(5-phospho-beta-D-ribosyl)glycinamide + L-glutamine + ATP + H2O = 2-formamido-N(1)-(5-O-phospho-beta-D-ribosyl)acetamidine + L-glutamate + ADP + phosphate + H(+). It participates in purine metabolism; IMP biosynthesis via de novo pathway; 5-amino-1-(5-phospho-D-ribosyl)imidazole from N(2)-formyl-N(1)-(5-phospho-D-ribosyl)glycinamide: step 1/2. In terms of biological role, phosphoribosylformylglycinamidine synthase involved in the purines biosynthetic pathway. Catalyzes the ATP-dependent conversion of formylglycinamide ribonucleotide (FGAR) and glutamine to yield formylglycinamidine ribonucleotide (FGAM) and glutamate. In Shewanella denitrificans (strain OS217 / ATCC BAA-1090 / DSM 15013), this protein is Phosphoribosylformylglycinamidine synthase.